The sequence spans 492 residues: MSKAVGDLGLVGLAVMGQNLILNAADHGFTVVAYNRTQSKVDRFLANEAKGKSIIGATSIEDLVAKLKKPRKIMLLIKAGAPVDTLIKELVPHLDKGDIIIDGGNSHFPDTNRRYEELTKQGILFVGSGVSGGEDGARFGPSLMPGGSAEAWPHIKNIFQSIAAKSNGEPCCEWVGPAGSGHYVKMVHNGIEYGDMQLICEAYDIMKRIGRFTDKEISEVFDKWNTGVLDSFLIEITRDILKFDDVDGKPLVEKIMDTAGQKGTGKWTAINALDLGMPVTLIGEAVFARCLSAIKDERKRASKLLAGPTVPKDAIHDREQFVYDLEQALYASKIISYAQGFMLIREAARSYGWKLNNPAIALMWRGGCIIRSVFLAEITKAYRDDPDLENLLFNEFFASAVTKAQSGWRRTIALAATYGIPTPAFSTALAFYDGYRSERLPANLLQAQRDYFGAHTFRILPECASAHLPVDKDIHINWTGHGGNISSSTYQA.

NADP(+)-binding positions include 12–17, 35–37, 77–79, and asparagine 105; these read GLAVMG, NRT, and IKA. Substrate contacts are provided by residues asparagine 105 and 131 to 133; that span reads SGG. The active-site Proton acceptor is lysine 185. 188–189 provides a ligand contact to substrate; it reads HN. The active-site Proton donor is glutamate 192. Residues tyrosine 193, lysine 262, arginine 289, arginine 449, and histidine 455 each coordinate substrate.

The protein belongs to the 6-phosphogluconate dehydrogenase family. As to quaternary structure, homodimer.

It carries out the reaction 6-phospho-D-gluconate + NADP(+) = D-ribulose 5-phosphate + CO2 + NADPH. The protein operates within carbohydrate degradation; pentose phosphate pathway; D-ribulose 5-phosphate from D-glucose 6-phosphate (oxidative stage): step 3/3. Catalyzes the oxidative decarboxylation of 6-phosphogluconate to ribulose 5-phosphate and CO(2), with concomitant reduction of NADP to NADPH. This chain is 6-phosphogluconate dehydrogenase, decarboxylating 2 (GND2), found in Saccharomyces cerevisiae (strain ATCC 204508 / S288c) (Baker's yeast).